Reading from the N-terminus, the 205-residue chain is Golgi apparatus membrane protein TVP23 homolog B (205 aa).

N-acetylmethionine is present on M1. Positions 1 to 21 (MLQQDSNDDTEDVSLFDAEEE) are disordered. 4 helical membrane-spanning segments follow: residues 34 to 53 (PVAS…VYLL), 54 to 72 (CELL…ILLL), 126 to 146 (IFWL…FSAL), and 152 to 172 (KWLA…YGYI).

It belongs to the TVP23 family.

The protein localises to the membrane. The chain is Golgi apparatus membrane protein TVP23 homolog B (TVP23B) from Pongo abelii (Sumatran orangutan).